The primary structure comprises 416 residues: Serine hydroxymethyltransferase (416 aa).

Residues Leu-121 and 125-127 contribute to the (6S)-5,6,7,8-tetrahydrofolate site; that span reads GHL. Lys-229 is modified (N6-(pyridoxal phosphate)lysine). Residues Glu-245 and 354–356 each bind (6S)-5,6,7,8-tetrahydrofolate; that span reads SPF.

This sequence belongs to the SHMT family. Homodimer. Pyridoxal 5'-phosphate serves as cofactor.

Its subcellular location is the cytoplasm. The catalysed reaction is (6R)-5,10-methylene-5,6,7,8-tetrahydrofolate + glycine + H2O = (6S)-5,6,7,8-tetrahydrofolate + L-serine. It functions in the pathway one-carbon metabolism; tetrahydrofolate interconversion. It participates in amino-acid biosynthesis; glycine biosynthesis; glycine from L-serine: step 1/1. Functionally, catalyzes the reversible interconversion of serine and glycine with tetrahydrofolate (THF) serving as the one-carbon carrier. This reaction serves as the major source of one-carbon groups required for the biosynthesis of purines, thymidylate, methionine, and other important biomolecules. Also exhibits THF-independent aldolase activity toward beta-hydroxyamino acids, producing glycine and aldehydes, via a retro-aldol mechanism. This is Serine hydroxymethyltransferase from Aliivibrio salmonicida (strain LFI1238) (Vibrio salmonicida (strain LFI1238)).